A 569-amino-acid polypeptide reads, in one-letter code: Isochorismate synthase 1, chloroplastic (569 aa).

The transit peptide at 1-45 (MASLQFSSQFLGSNTKTHSSIISISRSYSPTPFTRFSRKKYESCS) directs the protein to the chloroplast.

This sequence belongs to the isochorismate synthase family. In terms of assembly, monomer. It depends on Mg(2+) as a cofactor. In terms of tissue distribution, leaves.

The protein localises to the plastid. Its subcellular location is the chloroplast. It carries out the reaction chorismate = isochorismate. It functions in the pathway siderophore biosynthesis; salicylate biosynthesis. Its function is as follows. Isochorismate synthase involved in the synthesis of salicylic acid (SA) required for both local and systemic acquired resistance (LAR and SAR) while SA synthesized through the phenylalanine ammonium lyase (PAL) pathway seems to potentiate plant cell death. Also involved in phylloquinone (vitamin K1) synthesis. Has no isochorismate pyruvate lyase (IPL) activity. In Arabidopsis thaliana (Mouse-ear cress), this protein is Isochorismate synthase 1, chloroplastic (ICS1).